Reading from the N-terminus, the 114-residue chain is Propane 2-monooxygenase, effector component (114 aa).

The protein belongs to the TmoD/XamoD family. In terms of assembly, the propane 2-monooxygenase multicomponent enzyme system is composed of an electron transfer component and a monooxygenase component interacting with the effector protein MimD. The electron transfer component is composed of a reductase (MimB), and the monooxygenase component is formed by a large subunit (MimA) and a small subunit (MimC).

Its function is as follows. Effector component of the propane 2-monooxygenase multicomponent enzyme system which is involved in the degradation of propane via the O2-dependent hydroxylation of propane. The sequence is that of Propane 2-monooxygenase, effector component from Mycolicibacterium smegmatis (strain ATCC 700084 / mc(2)155) (Mycobacterium smegmatis).